The chain runs to 485 residues: Glutamyl-tRNA(Gln) amidotransferase subunit A 1 (485 aa).

Active-site charge relay system residues include Lys-79 and Ser-154. The active-site Acyl-ester intermediate is the Ser-178.

The protein belongs to the amidase family. GatA subfamily. Heterotrimer of A, B and C subunits.

The enzyme catalyses L-glutamyl-tRNA(Gln) + L-glutamine + ATP + H2O = L-glutaminyl-tRNA(Gln) + L-glutamate + ADP + phosphate + H(+). Functionally, allows the formation of correctly charged Gln-tRNA(Gln) through the transamidation of misacylated Glu-tRNA(Gln) in organisms which lack glutaminyl-tRNA synthetase. The reaction takes place in the presence of glutamine and ATP through an activated gamma-phospho-Glu-tRNA(Gln). This chain is Glutamyl-tRNA(Gln) amidotransferase subunit A 1 (gatA1), found in Clostridium acetobutylicum (strain ATCC 824 / DSM 792 / JCM 1419 / IAM 19013 / LMG 5710 / NBRC 13948 / NRRL B-527 / VKM B-1787 / 2291 / W).